The sequence spans 393 residues: Translation initiation factor eIF2B subunit beta (393 aa).

Residues Val105–Leu125 are disordered. Residues Ser106, Ser108, and Ser112 each carry the phosphoserine modification.

This sequence belongs to the eIF-2B alpha/beta/delta subunits family. As to quaternary structure, component of the translation initiation factor 2B (eIF2B) complex which is a heterodecamer of two sets of five different subunits: alpha, beta, gamma, delta and epsilon. Subunits alpha, beta and delta comprise a regulatory subcomplex and subunits epsilon and gamma comprise a catalytic subcomplex. Within the complex, the hexameric regulatory complex resides at the center, with the two heterodimeric catalytic subcomplexes bound on opposite sides.

The protein resides in the cytoplasm. It localises to the cytosol. In terms of biological role, acts as a component of the translation initiation factor 2B (eIF2B) complex, which catalyzes the exchange of GDP for GTP on the eukaryotic initiation factor 2 (eIF2) complex gamma subunit. Its guanine nucleotide exchange factor activity is repressed when bound to eIF2 complex phosphorylated on the alpha subunit, thereby limiting the amount of methionyl-initiator methionine tRNA available to the ribosome and consequently global translation is repressed. In Schizosaccharomyces pombe (strain 972 / ATCC 24843) (Fission yeast), this protein is Translation initiation factor eIF2B subunit beta (tif222).